The primary structure comprises 253 residues: Trypsin beta (253 aa).

An N-terminal signal peptide occupies residues M1 to G22. A propeptide spans L23–R30 (activation peptide). Residues I31–A253 form the Peptidase S1 domain. A disulfide bridge connects residues C56 and C72. Catalysis depends on charge relay system residues H71 and D116. 2 cysteine pairs are disulfide-bonded: C180/C197 and C206/C230. The active-site Charge relay system is S210.

This sequence belongs to the peptidase S1 family.

The protein localises to the secreted. The protein resides in the extracellular space. The enzyme catalyses Preferential cleavage: Arg-|-Xaa, Lys-|-Xaa.. This chain is Trypsin beta (betaTry), found in Drosophila erecta (Fruit fly).